We begin with the raw amino-acid sequence, 95 residues long: Small ribosomal subunit protein bS6 (95 aa).

The protein belongs to the bacterial ribosomal protein bS6 family.

Its function is as follows. Binds together with bS18 to 16S ribosomal RNA. This chain is Small ribosomal subunit protein bS6, found in Clostridium novyi (strain NT).